A 266-amino-acid polypeptide reads, in one-letter code: 4-hydroxy-tetrahydrodipicolinate reductase (266 aa).

11–16 provides a ligand contact to NAD(+); that stretch reads GALGKM. K39 lines the NADP(+) pocket. Residue 100-102 participates in NAD(+) binding; sequence GTT. The Proton donor/acceptor role is filled by H156. Residue H157 coordinates (S)-2,3,4,5-tetrahydrodipicolinate. The Proton donor role is filled by K160. 166 to 167 lines the (S)-2,3,4,5-tetrahydrodipicolinate pocket; it reads GT.

It belongs to the DapB family.

It localises to the cytoplasm. The catalysed reaction is (S)-2,3,4,5-tetrahydrodipicolinate + NAD(+) + H2O = (2S,4S)-4-hydroxy-2,3,4,5-tetrahydrodipicolinate + NADH + H(+). It catalyses the reaction (S)-2,3,4,5-tetrahydrodipicolinate + NADP(+) + H2O = (2S,4S)-4-hydroxy-2,3,4,5-tetrahydrodipicolinate + NADPH + H(+). It functions in the pathway amino-acid biosynthesis; L-lysine biosynthesis via DAP pathway; (S)-tetrahydrodipicolinate from L-aspartate: step 4/4. In terms of biological role, catalyzes the conversion of 4-hydroxy-tetrahydrodipicolinate (HTPA) to tetrahydrodipicolinate. This is 4-hydroxy-tetrahydrodipicolinate reductase from Syntrophomonas wolfei subsp. wolfei (strain DSM 2245B / Goettingen).